The chain runs to 802 residues: DEAD-box ATP-dependent RNA helicase 28 (802 aa).

Residues Met1–Pro179 are disordered. Acidic residues-rich tracts occupy residues Gly76–Glu131 and Lys138–Glu169. 2 coiled-coil regions span residues Asp90–Val122 and Gln149–Ser174. The Q motif motif lies at Asn194–Ala222. One can recognise a Helicase ATP-binding domain in the interval Ile225–Leu399. Ala238–Thr245 provides a ligand contact to ATP. Residues Asp347 to Asp350 carry the DEAD box motif. A Helicase C-terminal domain is found at Val429–Ala573. Residues Val572 to Lys616 adopt a coiled-coil conformation. The segment at Lys639–Lys802 is disordered. Over residues Ser644–Gln659 the composition is skewed to polar residues. Residues Lys666–Arg684 are compositionally biased toward basic residues. Residues Arg671–Lys712 are a coiled coil. Over residues Met691–Ala702 the composition is skewed to acidic residues. Over residues Arg776–Lys802 the composition is skewed to basic residues.

The protein belongs to the DEAD box helicase family. DDX27/DRS1 subfamily.

The catalysed reaction is ATP + H2O = ADP + phosphate + H(+). The polypeptide is DEAD-box ATP-dependent RNA helicase 28 (Oryza sativa subsp. japonica (Rice)).